The following is a 240-amino-acid chain: Adenosylcobinamide-GDP ribazoletransferase (240 aa).

A run of 5 helical transmembrane segments spans residues 31-51 (LLYYPLVGLLFGLLLWLASHL), 62-81 (ALLLTLWVLLSGALHLDGLA), 109-129 (IAVVTLVLVLLLKFCALWVLV), 133-153 (IGAQLLLAPLIGRAAMLGLFL), and 179-199 (VLLVCVLFCLFLGGWSVLLAL).

Belongs to the CobS family. Requires Mg(2+) as cofactor.

The protein localises to the cell inner membrane. It carries out the reaction alpha-ribazole + adenosylcob(III)inamide-GDP = adenosylcob(III)alamin + GMP + H(+). The enzyme catalyses alpha-ribazole 5'-phosphate + adenosylcob(III)inamide-GDP = adenosylcob(III)alamin 5'-phosphate + GMP + H(+). Its pathway is cofactor biosynthesis; adenosylcobalamin biosynthesis; adenosylcobalamin from cob(II)yrinate a,c-diamide: step 7/7. In terms of biological role, joins adenosylcobinamide-GDP and alpha-ribazole to generate adenosylcobalamin (Ado-cobalamin). Also synthesizes adenosylcobalamin 5'-phosphate from adenosylcobinamide-GDP and alpha-ribazole 5'-phosphate. This Pseudomonas putida (strain ATCC 47054 / DSM 6125 / CFBP 8728 / NCIMB 11950 / KT2440) protein is Adenosylcobinamide-GDP ribazoletransferase.